A 187-amino-acid chain; its full sequence is Ribosome-recycling factor (187 aa).

It belongs to the RRF family.

The protein localises to the cytoplasm. Responsible for the release of ribosomes from messenger RNA at the termination of protein biosynthesis. May increase the efficiency of translation by recycling ribosomes from one round of translation to another. This Paracoccus denitrificans (strain Pd 1222) protein is Ribosome-recycling factor.